The primary structure comprises 192 residues: Ion-translocating oxidoreductase complex subunit A (192 aa).

6 helical membrane passes run 5–25, 39–59, 72–92, 102–122, 134–154, and 171–191; these read LLLL…FLGL, IGMS…SFLV, LRTM…EMLV, ALGI…VALL, AIYG…FSAM, and AIAM…TGLV.

The protein belongs to the NqrDE/RnfAE family. The complex is composed of six subunits: RnfA, RnfB, RnfC, RnfD, RnfE and RnfG.

It localises to the cell inner membrane. Its function is as follows. Part of a membrane-bound complex that couples electron transfer with translocation of ions across the membrane. In Shewanella amazonensis (strain ATCC BAA-1098 / SB2B), this protein is Ion-translocating oxidoreductase complex subunit A.